The following is a 192-amino-acid chain: Ion-translocating oxidoreductase complex subunit B (192 aa).

A hydrophobic region spans residues 1-26 (MNAIWIAVVAVSLLGLAFGAILGYAS). In terms of domain architecture, 4Fe-4S spans 32 to 91 (EDDPVVEKIDEILPQSQCGQCGYPGCRPYAEAIGSQGEKINRCAPGGEAVMLKIATLLNV). [4Fe-4S] cluster contacts are provided by cysteine 49, cysteine 52, cysteine 57, cysteine 74, cysteine 117, cysteine 120, cysteine 123, cysteine 127, cysteine 147, cysteine 150, cysteine 153, and cysteine 157. 2 4Fe-4S ferredoxin-type domains span residues 108-137 (MLAV…GATR) and 138-167 (AMHT…LRPV).

It belongs to the 4Fe4S bacterial-type ferredoxin family. RnfB subfamily. As to quaternary structure, the complex is composed of six subunits: RnfA, RnfB, RnfC, RnfD, RnfE and RnfG. Requires [4Fe-4S] cluster as cofactor.

Its subcellular location is the cell inner membrane. Functionally, part of a membrane-bound complex that couples electron transfer with translocation of ions across the membrane. The protein is Ion-translocating oxidoreductase complex subunit B of Citrobacter koseri (strain ATCC BAA-895 / CDC 4225-83 / SGSC4696).